The chain runs to 552 residues: Steroid transmembrane transporter SLC22A24 (552 aa).

12 helical membrane-spanning segments follow: residues 16-36 (FQIL…PHIL), 146-166 (SVVQ…FGYL), 174-194 (MICS…AFAP), 204-224 (FLAG…VIEW), 235-255 (TLLL…AFVI), 260-280 (TLQL…RWLV), 349-369 (IVLY…GLIF), 380-400 (LFQV…LLVM), 407-427 (ISQV…TFLD), 436-456 (ILAT…SVHF), 473-493 (ILFS…VGFS), and 495-515 (YLPW…VLLL).

The protein belongs to the major facilitator (TC 2.A.1) superfamily. Organic cation transporter (TC 2.A.1.19) family.

The protein localises to the cell membrane. The enzyme catalyses estrone 3-sulfate(out) + glutarate(in) = estrone 3-sulfate(in) + glutarate(out). The catalysed reaction is 17beta-estradiol 17-O-(beta-D-glucuronate)(out) + glutarate(in) = 17beta-estradiol 17-O-(beta-D-glucuronate)(in) + glutarate(out). It catalyses the reaction 5alpha-androstane-3alpha,17beta-diol 3-O-(beta-D-glucuronate)(out) + glutarate(in) = 5alpha-androstane-3alpha,17beta-diol 3-O-(beta-D-glucuronate)(in) + glutarate(out). It carries out the reaction dehydroepiandrosterone 3-sulfate(out) + glutarate(in) = dehydroepiandrosterone 3-sulfate(in) + glutarate(out). The enzyme catalyses glutarate(in) + succinate(out) = glutarate(out) + succinate(in). Renal transmembrane organic anion/dicarboxylate exchanger that participates in the reabsorption of conjugated steroids, as well as bile acids, driven by an outward gradient of dicarboxylates such as glutarate or succinate. Transports androstanediol glucuronide (5alpha-androstane-3alpha,17beta-diol 3-O-(beta-D-glucuronate)), estrone 3-sulfate, and estradiol-17-glucuronide (17beta-estradiol 17-O-(beta-D-glucuronate)), but not taurocholate. The polypeptide is Steroid transmembrane transporter SLC22A24 (Microcebus murinus (Gray mouse lemur)).